The following is a 625-amino-acid chain: Threonine--tRNA ligase (625 aa).

The segment at 1–143 (MRILLIHSDY…ELSRTIIPEG (143 aa)) is editing domain. The segment at 206–505 (PHVKLMLEHE…MQEGKKPMLP (300 aa)) is catalytic. Positions 298, 350, and 474 each coordinate Zn(2+).

It belongs to the class-II aminoacyl-tRNA synthetase family. In terms of assembly, homodimer. Requires Zn(2+) as cofactor.

It is found in the cytoplasm. The catalysed reaction is tRNA(Thr) + L-threonine + ATP = L-threonyl-tRNA(Thr) + AMP + diphosphate + H(+). Catalyzes the attachment of threonine to tRNA(Thr) in a two-step reaction: L-threonine is first activated by ATP to form Thr-AMP and then transferred to the acceptor end of tRNA(Thr). Also edits incorrectly charged L-seryl-tRNA(Thr). In Pyrococcus horikoshii (strain ATCC 700860 / DSM 12428 / JCM 9974 / NBRC 100139 / OT-3), this protein is Threonine--tRNA ligase.